A 92-amino-acid chain; its full sequence is PqqA binding protein (92 aa).

Belongs to the PqqD family. In terms of assembly, monomer. Interacts with PqqE.

Its pathway is cofactor biosynthesis; pyrroloquinoline quinone biosynthesis. Its function is as follows. Functions as a PqqA binding protein and presents PqqA to PqqE, in the pyrroloquinoline quinone (PQQ) biosynthetic pathway. The polypeptide is PqqA binding protein (Xanthomonas axonopodis pv. citri (strain 306)).